The primary structure comprises 129 residues: Lysozyme C (129 aa).

Positions 1–129 constitute a C-type lysozyme domain; sequence KVYGRCELAA…VQAWIRGCRL (129 aa). 4 disulfides stabilise this stretch: C6–C127, C30–C115, C64–C80, and C76–C94. Residues E35 and D52 contribute to the active site.

The protein belongs to the glycosyl hydrolase 22 family. As to quaternary structure, monomer.

Its subcellular location is the secreted. The enzyme catalyses Hydrolysis of (1-&gt;4)-beta-linkages between N-acetylmuramic acid and N-acetyl-D-glucosamine residues in a peptidoglycan and between N-acetyl-D-glucosamine residues in chitodextrins.. Its function is as follows. Lysozymes have primarily a bacteriolytic function; those in tissues and body fluids are associated with the monocyte-macrophage system and enhance the activity of immunoagents. This chain is Lysozyme C (LYZ), found in Tragopan satyra (Satyr tragopan).